Here is a 261-residue protein sequence, read N- to C-terminus: Cytochrome c oxidase subunit 3 (261 aa).

At 1-15 (MTHQSHAYHMVKPSP) the chain is on the mitochondrial matrix side. The helical transmembrane segment at 16–34 (WPLTGALSALLMTSGLAMW) threads the bilayer. Residues 35–40 (FHFYST) lie on the Mitochondrial intermembrane side of the membrane. The helical transmembrane segment at 41–66 (TLLTLGLLTNTLTMYQWWRDVMREGT) threads the bilayer. The Mitochondrial matrix portion of the chain corresponds to 67-72 (YQGHHT). Residues 73–105 (PPVQKGLRYGMILFITSEVFFFAGFFWAFYHSS) traverse the membrane as a helical segment. The Mitochondrial intermembrane portion of the chain corresponds to 106 to 128 (LAPTPQLGGHWPPTGITPLNPLE). A helical transmembrane segment spans residues 129–152 (VPLLNTSVLLASGVSITWAHHSLM). The Mitochondrial matrix segment spans residues 153–155 (ENN). The helical transmembrane segment at 156–183 (RNQMIQALLITILLGLYFTLLQASEYFE) threads the bilayer. At 184–190 (SPFTISD) the chain is on the mitochondrial intermembrane side. Residues 191-223 (GIYGSTFFVATGFHGLHVIIGSTFLTICLIRQL) traverse the membrane as a helical segment. The Mitochondrial matrix portion of the chain corresponds to 224–232 (MFHFTSKHH). A helical transmembrane segment spans residues 233-256 (FGFQAAAWYWHFVDVVWLFLYVSI). At 257-261 (YWWGS) the chain is on the mitochondrial intermembrane side.

It belongs to the cytochrome c oxidase subunit 3 family. In terms of assembly, component of the cytochrome c oxidase (complex IV, CIV), a multisubunit enzyme composed of 14 subunits. The complex is composed of a catalytic core of 3 subunits MT-CO1, MT-CO2 and MT-CO3, encoded in the mitochondrial DNA, and 11 supernumerary subunits COX4I, COX5A, COX5B, COX6A, COX6B, COX6C, COX7A, COX7B, COX7C, COX8 and NDUFA4, which are encoded in the nuclear genome. The complex exists as a monomer or a dimer and forms supercomplexes (SCs) in the inner mitochondrial membrane with NADH-ubiquinone oxidoreductase (complex I, CI) and ubiquinol-cytochrome c oxidoreductase (cytochrome b-c1 complex, complex III, CIII), resulting in different assemblies (supercomplex SCI(1)III(2)IV(1) and megacomplex MCI(2)III(2)IV(2)).

Its subcellular location is the mitochondrion inner membrane. It carries out the reaction 4 Fe(II)-[cytochrome c] + O2 + 8 H(+)(in) = 4 Fe(III)-[cytochrome c] + 2 H2O + 4 H(+)(out). In terms of biological role, component of the cytochrome c oxidase, the last enzyme in the mitochondrial electron transport chain which drives oxidative phosphorylation. The respiratory chain contains 3 multisubunit complexes succinate dehydrogenase (complex II, CII), ubiquinol-cytochrome c oxidoreductase (cytochrome b-c1 complex, complex III, CIII) and cytochrome c oxidase (complex IV, CIV), that cooperate to transfer electrons derived from NADH and succinate to molecular oxygen, creating an electrochemical gradient over the inner membrane that drives transmembrane transport and the ATP synthase. Cytochrome c oxidase is the component of the respiratory chain that catalyzes the reduction of oxygen to water. Electrons originating from reduced cytochrome c in the intermembrane space (IMS) are transferred via the dinuclear copper A center (CU(A)) of subunit 2 and heme A of subunit 1 to the active site in subunit 1, a binuclear center (BNC) formed by heme A3 and copper B (CU(B)). The BNC reduces molecular oxygen to 2 water molecules using 4 electrons from cytochrome c in the IMS and 4 protons from the mitochondrial matrix. The protein is Cytochrome c oxidase subunit 3 (MT-CO3) of Pan troglodytes (Chimpanzee).